The chain runs to 589 residues: Kelch-like protein diablo (589 aa).

The segment at 1–22 is disordered; the sequence is MGDVLISDRPPSPARLSHTSEK. The BTB domain maps to 41-108; sequence CDVVINVSGR…CYTSHIVVEE (68 aa). A BACK domain is found at 143–245; it reads CLGIRAFADT…SPKFLVGTVG (103 aa). 6 Kelch repeats span residues 292 to 338, 340 to 386, 387 to 433, 435 to 480, 482 to 527, and 528 to 574; these read VLFA…VLND, LYAV…VLDG, FLYA…VLGG, LYAI…VFNN, IYAV…VVNG, and QLYA…VMRA.

It participates in protein modification; protein ubiquitination. Functionally, probable substrate-specific adapter of an E3 ubiquitin-protein ligase complex which mediates the ubiquitination and subsequent proteasomal degradation of target proteins. May have a role in synapse differentiation and growth. In Aedes aegypti (Yellowfever mosquito), this protein is Kelch-like protein diablo.